A 185-amino-acid chain; its full sequence is uncharacterized protein (185 aa).

The G domain occupies 17–137; it reads GKSSIMNALF…QKPIIVVINK (121 aa).

This is an uncharacterized protein from Methanocaldococcus jannaschii (strain ATCC 43067 / DSM 2661 / JAL-1 / JCM 10045 / NBRC 100440) (Methanococcus jannaschii).